An 81-amino-acid polypeptide reads, in one-letter code: Small ribosomal subunit protein bS18 (81 aa).

The protein belongs to the bacterial ribosomal protein bS18 family. Part of the 30S ribosomal subunit. Forms a tight heterodimer with protein bS6.

In terms of biological role, binds as a heterodimer with protein bS6 to the central domain of the 16S rRNA, where it helps stabilize the platform of the 30S subunit. The sequence is that of Small ribosomal subunit protein bS18 from Parvibaculum lavamentivorans (strain DS-1 / DSM 13023 / NCIMB 13966).